The sequence spans 66 residues: Large ribosomal subunit protein bL35 (66 aa).

The disordered stretch occupies residues Q25–R45. Residues G28–A44 are compositionally biased toward basic residues.

It belongs to the bacterial ribosomal protein bL35 family.

This chain is Large ribosomal subunit protein bL35, found in Rhodospirillum centenum (strain ATCC 51521 / SW).